A 421-amino-acid polypeptide reads, in one-letter code: 4-hydroxy-3-methylbut-2-en-1-yl diphosphate synthase (flavodoxin) (421 aa).

Residues Cys-311, Cys-314, Cys-357, and Glu-364 each coordinate [4Fe-4S] cluster.

The protein belongs to the IspG family. Requires [4Fe-4S] cluster as cofactor.

It carries out the reaction (2E)-4-hydroxy-3-methylbut-2-enyl diphosphate + oxidized [flavodoxin] + H2O + 2 H(+) = 2-C-methyl-D-erythritol 2,4-cyclic diphosphate + reduced [flavodoxin]. It participates in isoprenoid biosynthesis; isopentenyl diphosphate biosynthesis via DXP pathway; isopentenyl diphosphate from 1-deoxy-D-xylulose 5-phosphate: step 5/6. Its function is as follows. Converts 2C-methyl-D-erythritol 2,4-cyclodiphosphate (ME-2,4cPP) into 1-hydroxy-2-methyl-2-(E)-butenyl 4-diphosphate. This Xanthomonas oryzae pv. oryzae (strain MAFF 311018) protein is 4-hydroxy-3-methylbut-2-en-1-yl diphosphate synthase (flavodoxin).